Here is a 326-residue protein sequence, read N- to C-terminus: DNA-directed RNA polymerase subunit alpha (326 aa).

Residues 1–231 (MQTALLKPKI…DQLSVFAALE (231 aa)) form an alpha N-terminal domain (alpha-NTD) region. The tract at residues 247–326 (IDPILLRPVD…ENWPPAGLEK (80 aa)) is alpha C-terminal domain (alpha-CTD).

The protein belongs to the RNA polymerase alpha chain family. In terms of assembly, homodimer. The RNAP catalytic core consists of 2 alpha, 1 beta, 1 beta' and 1 omega subunit. When a sigma factor is associated with the core the holoenzyme is formed, which can initiate transcription.

The enzyme catalyses RNA(n) + a ribonucleoside 5'-triphosphate = RNA(n+1) + diphosphate. In terms of biological role, DNA-dependent RNA polymerase catalyzes the transcription of DNA into RNA using the four ribonucleoside triphosphates as substrates. The chain is DNA-directed RNA polymerase subunit alpha from Cupriavidus metallidurans (strain ATCC 43123 / DSM 2839 / NBRC 102507 / CH34) (Ralstonia metallidurans).